Here is a 433-residue protein sequence, read N- to C-terminus: GTPase Der (433 aa).

2 consecutive EngA-type G domains span residues 3 to 167 (KIVS…DKNI) and 175 to 349 (PRIA…FNLR). GTP contacts are provided by residues 9–16 (GRPNVGKS), 56–60 (DTGGY), 119–122 (NKID), 181–188 (GRPNVGKS), 228–232 (DTAGI), and 293–296 (NKWD). The KH-like domain maps to 350 to 433 (LRIKTSLLNK…IPIKILFRLK (84 aa)).

This sequence belongs to the TRAFAC class TrmE-Era-EngA-EngB-Septin-like GTPase superfamily. EngA (Der) GTPase family. Associates with the 50S ribosomal subunit.

GTPase that plays an essential role in the late steps of ribosome biogenesis. The sequence is that of GTPase Der from Karelsulcia muelleri (strain GWSS) (Sulcia muelleri).